A 339-amino-acid chain; its full sequence is 3-isopropylmalate dehydrogenase (339 aa).

Residues R88, R98, R122, and D212 each coordinate substrate. Residues D212, D236, and D240 each contribute to the Mg(2+) site. 272 to 284 contributes to the NAD(+) binding site; that stretch reads GSAPDIAGKGIAD.

Belongs to the isocitrate and isopropylmalate dehydrogenases family. LeuB type 2 subfamily. In terms of assembly, homodimer. Mg(2+) is required as a cofactor. The cofactor is Mn(2+).

Its subcellular location is the cytoplasm. The enzyme catalyses (2R,3S)-3-isopropylmalate + NAD(+) = 4-methyl-2-oxopentanoate + CO2 + NADH. It participates in amino-acid biosynthesis; L-leucine biosynthesis; L-leucine from 3-methyl-2-oxobutanoate: step 3/4. In terms of biological role, catalyzes the oxidation of 3-carboxy-2-hydroxy-4-methylpentanoate (3-isopropylmalate) to 3-carboxy-4-methyl-2-oxopentanoate. The product decarboxylates to 4-methyl-2 oxopentanoate. The protein is 3-isopropylmalate dehydrogenase of Corynebacterium aurimucosum (strain ATCC 700975 / DSM 44827 / CIP 107346 / CN-1) (Corynebacterium nigricans).